A 447-amino-acid chain; its full sequence is T-box transcription factor TBX20 (447 aa).

Residues 62–81 (DAHGEFGGGSGSSPSSSSLC) form a disordered region. The segment at residues 109-288 (LWDKFHELGT…SNPFAKGFRD (180 aa)) is a DNA-binding region (T-box). The segment at 316–340 (TYGGEEDVLGDESQTTPNRGSAFTT) is disordered. A compositionally biased stretch (polar residues) spans 327 to 340 (ESQTTPNRGSAFTT).

It localises to the nucleus. In terms of biological role, acts as a transcriptional activator and repressor required for cardiac development and may have key roles in the maintenance of functional and structural phenotypes in adult heart. The chain is T-box transcription factor TBX20 (TBX20) from Homo sapiens (Human).